The primary structure comprises 278 residues: 3-methyl-2-oxobutanoate hydroxymethyltransferase (278 aa).

Mg(2+) contacts are provided by Asp-43 and Asp-82. 3-methyl-2-oxobutanoate contacts are provided by residues 43-44, Asp-82, and Lys-112; that span reads DS. Glu-114 contacts Mg(2+). The active-site Proton acceptor is the Glu-181.

The protein belongs to the PanB family. Homodecamer; pentamer of dimers. The cofactor is Mg(2+).

It localises to the cytoplasm. It catalyses the reaction 3-methyl-2-oxobutanoate + (6R)-5,10-methylene-5,6,7,8-tetrahydrofolate + H2O = 2-dehydropantoate + (6S)-5,6,7,8-tetrahydrofolate. It functions in the pathway cofactor biosynthesis; (R)-pantothenate biosynthesis; (R)-pantoate from 3-methyl-2-oxobutanoate: step 1/2. Its function is as follows. Catalyzes the reversible reaction in which hydroxymethyl group from 5,10-methylenetetrahydrofolate is transferred onto alpha-ketoisovalerate to form ketopantoate. The chain is 3-methyl-2-oxobutanoate hydroxymethyltransferase from Bacillus cereus (strain ATCC 14579 / DSM 31 / CCUG 7414 / JCM 2152 / NBRC 15305 / NCIMB 9373 / NCTC 2599 / NRRL B-3711).